The sequence spans 911 residues: Nitrate reductase [NADH], clone PBNBR1412 (911 aa).

The tract at residues 53 to 72 is disordered; the sequence is NDAVDDSYDSSDDEDESHNR. The segment covering 56 to 68 has biased composition (acidic residues); sequence VDDSYDSSDDEDE. Cys191 serves as a coordination point for Mo-molybdopterin. In terms of domain architecture, Cytochrome b5 heme-binding spans 539–614; that stretch reads AKMYSMSEVR…LEDYRIGELI (76 aa). His574 and His597 together coordinate heme. An FAD-binding FR-type domain is found at 654–766; it reads REKVPVTLIE…KGPLGHIEYL (113 aa). Residues 706–709, 723–727, Phe728, Phe735, 740–742, and Thr793 contribute to the FAD site; these read RAYT, VVKVY, and LMS.

The protein belongs to the nitrate reductase family. Homodimer. FAD serves as cofactor. It depends on heme as a cofactor. Mo-molybdopterin is required as a cofactor.

It carries out the reaction nitrite + NAD(+) + H2O = nitrate + NADH + H(+). In terms of biological role, nitrate reductase is a key enzyme involved in the first step of nitrate assimilation in plants, fungi and bacteria. This chain is Nitrate reductase [NADH], clone PBNBR1412 (NIA2), found in Brassica napus (Rape).